A 92-amino-acid polypeptide reads, in one-letter code: Probable Fe(2+)-trafficking protein (92 aa).

This sequence belongs to the Fe(2+)-trafficking protein family.

Functionally, could be a mediator in iron transactions between iron acquisition and iron-requiring processes, such as synthesis and/or repair of Fe-S clusters in biosynthetic enzymes. The sequence is that of Probable Fe(2+)-trafficking protein from Shewanella halifaxensis (strain HAW-EB4).